The primary structure comprises 442 residues: Putative zinc metalloprotease PM1991 (442 aa).

Histidine 21 contributes to the Zn(2+) binding site. Glutamate 22 is a catalytic residue. Zn(2+) is bound at residue histidine 25. A helical transmembrane segment spans residues 97–119; the sequence is AFVIAAGPIANFLFAILAYFTIY. Residues 198 to 286 form the PDZ domain; sequence DWRFDPEKES…FSFVVLTPEL (89 aa). The next 2 helical transmembrane spans lie at 366–388 and 418–440; these read IGLI…MNLF and LSYR…NDFL.

This sequence belongs to the peptidase M50B family. Zn(2+) is required as a cofactor.

Its subcellular location is the cell inner membrane. In Pasteurella multocida (strain Pm70), this protein is Putative zinc metalloprotease PM1991.